A 904-amino-acid chain; its full sequence is MDDFTGLLARDFGLKPQGKSAPMASQSNSSAADFNTFASSYSFATAAGKKSDSLPVFDDPGRDGDDLLFKDVFSGPPPPKYGSSSGDSRSPSAPAFDYDAMFKEPKSKSASSMPVYDKPVYDDEDVFESIPELKIPSTSSQSARFENVFSSISSSPTKHRKQNSSPFDDLMGNNLGKKGADSDREEKGSSIFDDLIPGFGRTSSPPSKRTTSETTNQSEKAPYRTAETSSNVEEDPFVVLEESESTPREPSRTDPLDDIGKFNSRKTDHSSVHGGVFVDIDPLDNLGKPGPDMNSKGKSHLRPPGNISGSQSPPVESPGSYHSKKVSFEDFLEPHNMSTPPPTNSNGSFESSDDVWLTVSEIPLFTQPTSAPPPTRPPPPRPTRPIKKKVNEPSIPTSAYHSHVPSSGRASVNSPTASQMDELDDFSIGRNQTAANGYPDPSSGEDSDVFSTAAASAAAMKDAMDKAEAKFRHAKERREKENLKASRSREGDHTENYDSRERELREKQVRLDRERAEREAEMEKAQEREKEEREREQKRIERERERLVARQAVERATREARERAATEAHAKVQRAAVGKATDARERAERAAVQRAHAEARERAAAGARDKAAKAAAEAREKAEKAAAEAKERANAEAREKETRVRAERAAVERAAAEARGRAAAQAKAKQQQENTNDLDSFFSSISRPNSAPRQRTNPLDPFQDSWNKGGSFESSRESLRVPPGQPENLRKTSSVTNIVDDLSSIFGASASQSGGFQDVDGETEERRRARLERHQRTQERAAKALAEKNERDLQVQREQVEKDRIGVTLDVEIKRWGAGKEGNLRALLSTLQYVLWPECGWQPVSLTDLITAASVKKVYRKATLCIHPDKVQQKGANLQQKYIAEKVFDMLKEAWNKFNSEELF.

Disordered stretches follow at residues 46 to 99 (AAGK…FDYD), 150 to 731 (SSIS…NLRK), and 749 to 776 (SASQ…RHQR). Residues 59–69 (DPGRDGDDLLF) are compositionally biased toward basic and acidic residues. Low complexity predominate over residues 81–95 (YGSSSGDSRSPSAPA). A compositionally biased stretch (basic and acidic residues) spans 178-188 (KGADSDREEKG). Residues 201–215 (RTSSPPSKRTTSETT) are compositionally biased toward low complexity. Residues 232-244 (VEEDPFVVLEESE) are compositionally biased toward acidic residues. Basic and acidic residues predominate over residues 245-271 (STPREPSRTDPLDDIGKFNSRKTDHSS). Residues 370 to 383 (SAPPPTRPPPPRPT) are compositionally biased toward pro residues. Residues 394-419 (SIPTSAYHSHVPSSGRASVNSPTASQ) show a composition bias toward polar residues. Residues 456-663 (SAAAMKDAMD…AAAEARGRAA (208 aa)) adopt a coiled-coil conformation. Basic and acidic residues-rich tracts occupy residues 462–570 (DAMD…EAHA) and 581–660 (TDAR…EARG). Residues 619–640 (REKAEKAAAEAKERANAEAREK) enclose the R domain. A compositionally biased stretch (low complexity) spans 661-673 (RAAAQAKAKQQQE). Over residues 674 to 697 (NTNDLDSFFSSISRPNSAPRQRTN) the composition is skewed to polar residues. Residues 762–804 (ETEERRRARLERHQRTQERAAKALAEKNERDLQVQREQVEKDR) adopt a coiled-coil conformation. Basic and acidic residues predominate over residues 764–776 (EERRRARLERHQR). One can recognise a J domain in the interval 839–904 (CGWQPVSLTD…WNKFNSEELF (66 aa)).

Interacts with SH3P1.

The protein localises to the cell membrane. It localises to the golgi apparatus. It is found in the trans-Golgi network. The protein resides in the endoplasmic reticulum. Its subcellular location is the cytoplasmic vesicle. In terms of biological role, promotes uncoating of clathrin-coated vesicles. May interact directly with clathrin. The polypeptide is Auxilin-related protein 1 (Arabidopsis thaliana (Mouse-ear cress)).